The chain runs to 945 residues: Sensor kinase CckA (945 aa).

The next 2 membrane-spanning stretches (helical) occupy residues 111–131 (ALRL…YFLF) and 139–159 (FALV…FGAA). PAS domains lie at 171–212 (HQDL…TDAD), 313–341 (LDHA…EWLG), and 432–505 (AEVR…FAGQ). The Histidine kinase domain occupies 574 to 797 (GIAHDFNNVL…TFKIFLPRLI (224 aa)). H577 bears the Phosphohistidine; by autocatalysis mark. Positions 825–941 (TVLLVEDEDA…QLATTVKEML (117 aa)) constitute a Response regulatory domain. Position 876 is a 4-aspartylphosphate (D876).

It is found in the cell inner membrane. The catalysed reaction is ATP + protein L-histidine = ADP + protein N-phospho-L-histidine.. Functionally, component of a regulatory phosphorelay system that controls B.abortus cell growth, division, and intracellular survival inside mammalian host cells. This signaling pathway is composed of CckA, ChpT, CtrA and CpdR. CckA autophosphorylates in the presence of ATP on a conserved His residue and transfers a phosphoryl group to a conserved Asp residue on its C-terminal receiver domain. CckA-P transfers phosphoryl groups to the ChpT phosphotransferase. The protein is Sensor kinase CckA of Brucella abortus (strain 2308).